The primary structure comprises 120 residues: uncharacterized protein (120 aa).

Residues 29 to 120 form the Nudix hydrolase domain; sequence QRQAAVLVPI…QVTPVVGIIP (92 aa). The Nudix box motif lies at 67–89; that stretch reads GAVDNSDATLIAAALREAQEEVA. Glu83 and Glu87 together coordinate Mg(2+).

Belongs to the Nudix hydrolase family. PCD1 subfamily. Requires Mn(2+) as cofactor. Mg(2+) serves as cofactor.

Its function is as follows. Probably mediates the hydrolysis of some nucleoside diphosphate derivatives. This is an uncharacterized protein from Klebsiella aerogenes (Enterobacter aerogenes).